The chain runs to 342 residues: Ferredoxin--NADP reductase (342 aa).

Positions 17, 36, 44, 49, 89, 124, 289, and 330 each coordinate FAD.

This sequence belongs to the ferredoxin--NADP reductase type 2 family. Homodimer. The cofactor is FAD.

The enzyme catalyses 2 reduced [2Fe-2S]-[ferredoxin] + NADP(+) + H(+) = 2 oxidized [2Fe-2S]-[ferredoxin] + NADPH. The sequence is that of Ferredoxin--NADP reductase from Nitrobacter winogradskyi (strain ATCC 25391 / DSM 10237 / CIP 104748 / NCIMB 11846 / Nb-255).